The following is a 528-amino-acid chain: Calcium-dependent protein kinase 4 (528 aa).

Positions methionine 1–serine 36 are disordered. Glycine 2 is lipidated: N-myristoyl glycine. Basic residues predominate over residues glutamate 14–leucine 23. The 259-residue stretch at lysine 71–lysine 329 folds into the Protein kinase domain. ATP-binding positions include leucine 76–valine 84 and lysine 99. The Proton acceptor role is filled by aspartate 193. Residues asparagine 350 to glutamine 358 carry the J domain autoinhibitory motif motif. The j domain stretch occupies residues asparagine 350–lysine 386. A J domain EF-hand interaction motif motif is present at residues lysine 359–methionine 368. EF-hand domains lie at aspartate 376–leucine 411, glutamate 427–leucine 458, leucine 459–serine 494, and glutamate 496–tyrosine 528. 20 residues coordinate Ca(2+): aspartate 389, asparagine 391, aspartate 393, glutamine 395, glutamate 400, aspartate 436, aspartate 438, asparagine 440, tyrosine 442, glutamate 447, aspartate 472, aspartate 474, serine 476, lysine 478, glutamate 483, aspartate 506, asparagine 508, aspartate 510, glutamate 512, and glutamate 517.

The protein belongs to the protein kinase superfamily. Ser/Thr protein kinase family. CDPK subfamily. May interact with the pre-replication MCM complex prior male gametogenesis activation. Requires Mg(2+) as cofactor. In terms of processing, myristoylated; myristoylation may target it to different subcellular compartments. During male gametogenesis, myristoylation is required to initiate DNA replication but not for mitotic spindle assembly or axoneme activation. Post-translationally, not palmitoylated. May be autophosphorylated on Thr-234 in vitro.

The protein resides in the cytoplasm. The protein localises to the cell membrane. It carries out the reaction L-seryl-[protein] + ATP = O-phospho-L-seryl-[protein] + ADP + H(+). It catalyses the reaction L-threonyl-[protein] + ATP = O-phospho-L-threonyl-[protein] + ADP + H(+). Activated by calcium. Upon calcium binding to the EF-hand domains, the C-terminus of the junction domain (J domain) undergoes a conformational change which results in the dissociation of the pseudo-substrate inhibitory motif from the catalytic domain. This, in turn, may facilitate the autophosphorylation of the activation loop at Thr-234, which leads to the kinase activation. Intracellular calcium increase is triggered by xanthurenic acid (XA), a small mosquito molecule that induces the differentiation of specialized transmission stages, the gametocytes, into male and female gametes. Activated by a decrease in temperature (20 degrees Celsius) and an increase in pH (7.6) occurring when the parasite is ingested by in the mosquito. In terms of biological role, calcium-dependent protein kinase which acts as a sensor and effector of intracellular Ca(2+) levels probably in part downstream of cGMP-activated PKG kinase. Plays a central role in the host erythrocytes and hepatocytes infection cycles, sexual reproduction and mosquito transmission of the parasite. During the liver stage, involved in sporozoite motility and thus in sporozoite invasion of host hepatocytes, probably together with CDPK1 and CDPK5. Involved in merosome egress from host hepatocytes, probably together with CDPK5. During the asexual blood stage, involved in merozoite invasion of host erythrocytes and motility by stabilizing the inner membrane complex, a structure below the plasma membrane which acts as an anchor for the glidosome, an acto-myosin motor. Required for cell cycle progression in the male gametocyte. During male gametogenesis in the mosquito gut, required to initiate the first round of DNA replication, probably by facilitating the assembly of the pre-replicative MCM complex, to assemble the first mitotic spindle and, at the end of gametogenesis, to initiate axoneme motility, cytokinesis and subsequent exflagellation. For each of these steps, may phosphorylate SOC1, SOC2 and SOC3, respectively. Together with CDPK1, regulates ookinete gliding in the mosquito host midgut. The sequence is that of Calcium-dependent protein kinase 4 from Plasmodium falciparum (isolate 3D7).